Reading from the N-terminus, the 146-residue chain is Transcriptional regulator MraZ (146 aa).

SpoVT-AbrB domains follow at residues 5 to 48 (TSYH…TLEE) and 77 to 120 (ASEC…SRAK).

It belongs to the MraZ family. As to quaternary structure, forms oligomers.

Its subcellular location is the cytoplasm. It localises to the nucleoid. The protein is Transcriptional regulator MraZ of Desulfosudis oleivorans (strain DSM 6200 / JCM 39069 / Hxd3) (Desulfococcus oleovorans).